The following is a 330-amino-acid chain: Succinylglutamate desuccinylase (330 aa).

Positions 53, 56, and 147 each coordinate Zn(2+). Glutamate 210 is an active-site residue.

The protein belongs to the AspA/AstE family. Succinylglutamate desuccinylase subfamily. It depends on Zn(2+) as a cofactor.

It carries out the reaction N-succinyl-L-glutamate + H2O = L-glutamate + succinate. Its pathway is amino-acid degradation; L-arginine degradation via AST pathway; L-glutamate and succinate from L-arginine: step 5/5. Its function is as follows. Transforms N(2)-succinylglutamate into succinate and glutamate. The sequence is that of Succinylglutamate desuccinylase from Yersinia enterocolitica serotype O:8 / biotype 1B (strain NCTC 13174 / 8081).